Reading from the N-terminus, the 151-residue chain is Flagellar assembly factor FliW (151 aa).

The protein belongs to the FliW family. As to quaternary structure, interacts with translational regulator CsrA and flagellin(s).

The protein localises to the cytoplasm. Its function is as follows. Acts as an anti-CsrA protein, binds CsrA and prevents it from repressing translation of its target genes, one of which is flagellin. Binds to flagellin and participates in the assembly of the flagellum. In Natranaerobius thermophilus (strain ATCC BAA-1301 / DSM 18059 / JW/NM-WN-LF), this protein is Flagellar assembly factor FliW.